A 100-amino-acid chain; its full sequence is MARKSLIQREKKKQRLERKYNLLRQSLKKEMSEVSSLDDKLDIYRKLQSLPRNSAPTRLRRRCLKTGRPRANYRDFELSGYIIREMAHACLLAGVTKSSW.

Belongs to the universal ribosomal protein uS14 family. Part of the 30S ribosomal subunit.

Its subcellular location is the plastid. The protein localises to the chloroplast. In terms of biological role, binds 16S rRNA, required for the assembly of 30S particles. This Cryptomeria japonica (Japanese cedar) protein is Small ribosomal subunit protein uS14c.